The primary structure comprises 738 residues: Dipeptidyl peptidase 3 (738 aa).

N-acetylalanine is present on Ala2. His450 is a binding site for Zn(2+). Glu451 is an active-site residue. His455 and Glu508 together coordinate Zn(2+).

It belongs to the peptidase M49 family. Zn(2+) is required as a cofactor.

Its subcellular location is the cytoplasm. The protein resides in the cytosol. It catalyses the reaction Release of an N-terminal dipeptide from a peptide comprising four or more residues, with broad specificity. Also acts on dipeptidyl 2-naphthylamides.. Its function is as follows. Cleaves and degrades bioactive peptides, including angiotensin, Leu-enkephalin and Met-enkephalin. Also cleaves Arg-Arg-beta-naphthylamide (in vitro). In Mus musculus (Mouse), this protein is Dipeptidyl peptidase 3 (Dpp3).